An 853-amino-acid polypeptide reads, in one-letter code: DNA mismatch repair protein MutS (853 aa).

614-621 (GPNMGGKS) lines the ATP pocket.

It belongs to the DNA mismatch repair MutS family.

In terms of biological role, this protein is involved in the repair of mismatches in DNA. It is possible that it carries out the mismatch recognition step. This protein has a weak ATPase activity. The polypeptide is DNA mismatch repair protein MutS (Escherichia coli O6:K15:H31 (strain 536 / UPEC)).